We begin with the raw amino-acid sequence, 358 residues long: Mitogen-activated protein kinase hog-1 (358 aa).

In terms of domain architecture, Protein kinase spans 20–299; it reads YSDLQPVGMG…ATEALSHEYL (280 aa). ATP-binding positions include 26–34 and lysine 49; that span reads VGMGAFGLV. The active-site Proton acceptor is the aspartate 141. Phosphothreonine is present on threonine 171. The TXY signature appears at 171-173; sequence TGY. Tyrosine 173 carries the phosphotyrosine modification.

Belongs to the protein kinase superfamily. Ser/Thr protein kinase family. MAP kinase subfamily. HOG1 sub-subfamily. Mg(2+) is required as a cofactor. Post-translationally, dually phosphorylated on Thr-171 and Tyr-173, which activates the enzyme. Phosphorylation is induced by fungicides and osmotic stress.

The protein resides in the cytoplasm. It localises to the nucleus. The enzyme catalyses L-seryl-[protein] + ATP = O-phospho-L-seryl-[protein] + ADP + H(+). It catalyses the reaction L-threonyl-[protein] + ATP = O-phospho-L-threonyl-[protein] + ADP + H(+). Its activity is regulated as follows. Activated by tyrosine and threonine phosphorylation. Functionally, proline-directed serine/threonine-protein kinase involved in a signal transduction pathway that is activated by changes in the osmolarity of the extracellular environment. Controls osmotic regulation of transcription of target genes. Involved in ion flux-mediated turgor regulation. This is Mitogen-activated protein kinase hog-1 (hog-1) from Neurospora crassa (strain ATCC 24698 / 74-OR23-1A / CBS 708.71 / DSM 1257 / FGSC 987).